The sequence spans 391 residues: Ribosomal RNA small subunit methyltransferase H (391 aa).

A disordered region spans residues 1–23 (MDVDVQDDVQGRAGEGAEERAHD). S-adenosyl-L-methionine-binding positions include 59-61 (GGH), Asp-78, Leu-112, Asp-126, and Gln-133. The segment at 284 to 391 (SSSSAPPDLP…EPGATVERTP (108 aa)) is disordered. A compositionally biased stretch (basic and acidic residues) spans 368 to 380 (RTQEFETHPHLEP).

Belongs to the methyltransferase superfamily. RsmH family.

The protein resides in the cytoplasm. It carries out the reaction cytidine(1402) in 16S rRNA + S-adenosyl-L-methionine = N(4)-methylcytidine(1402) in 16S rRNA + S-adenosyl-L-homocysteine + H(+). Specifically methylates the N4 position of cytidine in position 1402 (C1402) of 16S rRNA. The chain is Ribosomal RNA small subunit methyltransferase H from Kineococcus radiotolerans (strain ATCC BAA-149 / DSM 14245 / SRS30216).